The chain runs to 191 residues: Protein Ves (191 aa).

This sequence belongs to the Ves family.

This Escherichia fergusonii (strain ATCC 35469 / DSM 13698 / CCUG 18766 / IAM 14443 / JCM 21226 / LMG 7866 / NBRC 102419 / NCTC 12128 / CDC 0568-73) protein is Protein Ves.